Reading from the N-terminus, the 126-residue chain is Acyl carrier protein 2, mitochondrial (126 aa).

The N-terminal 36 residues, 1 to 36 (MAARGAMLRYLRVNVNPTIQNPRECVLPFSILLRRF), are a transit peptide targeting the mitochondrion. Residues 48–123 (SEVTDRVLSV…LAVDFIASHP (76 aa)) enclose the Carrier domain. Residue S83 is modified to O-(pantetheine 4'-phosphoryl)serine.

The protein belongs to the acyl carrier protein (ACP) family. Complex I is composed of at least 49 different subunits. Post-translationally, 4'-phosphopantetheine is transferred from CoA to a specific serine of the apo-ACP-like protein.

The protein localises to the mitochondrion. Its pathway is lipid metabolism; fatty acid biosynthesis. Functionally, carrier of the growing fatty acid chain in fatty acid biosynthesis. May be involved in the synthesis of short and medium chain fatty acids. Accessory and non-catalytic subunit of the mitochondrial membrane respiratory chain NADH dehydrogenase (Complex I), which functions in the transfer of electrons from NADH to the respiratory chain. This is Acyl carrier protein 2, mitochondrial (MTACP2) from Arabidopsis thaliana (Mouse-ear cress).